Reading from the N-terminus, the 188-residue chain is Ribose 1,5-bisphosphate phosphokinase PhnN (188 aa).

Residue Gly9 to Asp16 participates in ATP binding.

The protein belongs to the ribose 1,5-bisphosphokinase family.

The catalysed reaction is alpha-D-ribose 1,5-bisphosphate + ATP = 5-phospho-alpha-D-ribose 1-diphosphate + ADP. Its pathway is metabolic intermediate biosynthesis; 5-phospho-alpha-D-ribose 1-diphosphate biosynthesis; 5-phospho-alpha-D-ribose 1-diphosphate from D-ribose 5-phosphate (route II): step 3/3. In terms of biological role, catalyzes the phosphorylation of ribose 1,5-bisphosphate to 5-phospho-D-ribosyl alpha-1-diphosphate (PRPP). In Pectobacterium atrosepticum (strain SCRI 1043 / ATCC BAA-672) (Erwinia carotovora subsp. atroseptica), this protein is Ribose 1,5-bisphosphate phosphokinase PhnN.